Consider the following 115-residue polypeptide: Large ribosomal subunit protein bL19 (115 aa).

This sequence belongs to the bacterial ribosomal protein bL19 family. Part of the 50S ribosomal subunit.

Its function is as follows. This protein is located at the 30S-50S ribosomal subunit interface and may play a role in the structure and function of the aminoacyl-tRNA binding site. The sequence is that of Large ribosomal subunit protein bL19 (rplS) from Bacillus subtilis (strain 168).